Here is a 79-residue protein sequence, read N- to C-terminus: D-alanyl carrier protein (79 aa).

One can recognise a Carrier domain in the interval Met1 to Lys76. Ser34 is subject to O-(pantetheine 4'-phosphoryl)serine.

Belongs to the DltC family. 4'-phosphopantetheine is transferred from CoA to a specific serine of apo-DCP.

It is found in the cytoplasm. It participates in cell wall biogenesis; lipoteichoic acid biosynthesis. Its function is as follows. Carrier protein involved in the D-alanylation of lipoteichoic acid (LTA). The loading of thioester-linked D-alanine onto DltC is catalyzed by D-alanine--D-alanyl carrier protein ligase DltA. The DltC-carried D-alanyl group is further transferred to cell membrane phosphatidylglycerol (PG) by forming an ester bond, probably catalyzed by DltD. D-alanylation of LTA plays an important role in modulating the properties of the cell wall in Gram-positive bacteria, influencing the net charge of the cell wall. The polypeptide is D-alanyl carrier protein (Lactococcus lactis subsp. lactis (strain IL1403) (Streptococcus lactis)).